Here is an 889-residue protein sequence, read N- to C-terminus: F-BAR domain only protein 1 (889 aa).

The region spanning 1–248 is the F-BAR domain; sequence MSYFGEHFWG…NIENVSVEML (248 aa). Residues 1 to 275 form a mediates membrane-binding region; it reads MSYFGEHFWG…LDFEAYSAAA (275 aa). Positions 156 to 195 form a coiled coil; sequence TSQKEMDKAETKTKKAAESLRRSVEKYNSARADFEQKMLD. Residues 267-442 form a mediates interaction with the adaptor protein complex AP-2 region; it reads DFEAYSAAAL…KNLFGPPLES (176 aa). Residues 294–352 form a disordered region; that stretch reads LSRREREPEPPAAVDFLEPDSGTCPEVDEEGFTVRPDVTQNSTAEPSRFSSSDSDFDDE. 3 positions are modified to phosphoserine: S295, S347, and S372. Residues 382–596 are disordered; that stretch reads ATAGSLILPP…SPLGSSAAST (215 aa). Residues 450–469 are compositionally biased toward low complexity; it reads TGSSSLGFTSSPSPFSSSSP. Positions 496 to 511 are enriched in pro residues; it reads PGTPQSPPSCRAPPPE. S530 carries the post-translational modification Phosphoserine. Residues 580–596 are compositionally biased toward low complexity; the sequence is LSRSLSPSPLGSSAAST. A mediates interaction with AGFG1, CALM, DAB2, EPS15, EPS15R, ITSN1 and clathrin region spans residues 609-889; that stretch reads HGVSRGPSPV…FATGMYLVSC (281 aa). The residue at position 616 (S616) is a Phosphoserine. The 264-residue stretch at 625–888 folds into the MHD domain; it reads ALPIATAFTE…RFATGMYLVS (264 aa). A disordered region spans residues 826 to 849; the sequence is AGGSGRLSASWEPLSGPSTPSPVA.

Belongs to the FCHO family. May oligomerize and form homotetramer. Interacts with AP2A2 and AP2B1; 2 subunits of the adaptor protein complex AP-2. Interacts with DAB2. Interacts with clathrin (CLTC or CLTCL1). Interacts with EPS15, EPS15R and ITSN1. Interacts with AGFG1 and CALM. May interact with ACVR1; linking this receptor to clathrin-mediated endocytosis. In terms of tissue distribution, predominantly expressed in lymphoid cells.

The protein resides in the membrane. The protein localises to the clathrin-coated pit. Functionally, functions in an early step of clathrin-mediated endocytosis. Has both a membrane binding/bending activity and the ability to recruit proteins essential to the formation of functional clathrin-coated pits. May regulate Bmp signaling by regulating clathrin-mediated endocytosis of Bmp receptors. Involved in the regulation of T-cell poliferation and activation. Affects TCR clustering upon receptor triggering and modulates its internalisation, playing a role in TCR-dependent T-cell activation. The chain is F-BAR domain only protein 1 from Homo sapiens (Human).